We begin with the raw amino-acid sequence, 256 residues long: 5-keto-4-deoxy-D-glucarate aldolase (256 aa).

The Proton acceptor role is filled by His50. Gln151 contributes to the substrate binding site. Glu153 serves as a coordination point for Mg(2+). Residues Ser178 and Asp179 each contribute to the substrate site. Asp179 contributes to the Mg(2+) binding site.

The protein belongs to the HpcH/HpaI aldolase family. KDGluc aldolase subfamily. In terms of assembly, homohexamer; trimer of dimers. Mg(2+) is required as a cofactor.

The enzyme catalyses 5-dehydro-4-deoxy-D-glucarate = 2-hydroxy-3-oxopropanoate + pyruvate. It catalyses the reaction 2-dehydro-3-deoxy-D-glucarate = 2-hydroxy-3-oxopropanoate + pyruvate. It participates in carbohydrate acid metabolism; galactarate degradation; D-glycerate from galactarate: step 2/3. Its function is as follows. Catalyzes the reversible retro-aldol cleavage of both 5-keto-4-deoxy-D-glucarate and 2-keto-3-deoxy-D-glucarate to pyruvate and tartronic semialdehyde. The polypeptide is 5-keto-4-deoxy-D-glucarate aldolase (Shigella dysenteriae serotype 1 (strain Sd197)).